Reading from the N-terminus, the 705-residue chain is SPbeta prophage-derived sublancin-168-processing and transport ATP-binding protein SunT (705 aa).

Positions 12–138 (QFNSHDCGLA…SKFTNFILEI (127 aa)) constitute a Peptidase C39 domain. Residue Cys-18 is part of the active site. A run of 6 helical transmembrane segments spans residues 167-187 (IVFV…AGSF), 205-225 (LITI…FDFV), 281-301 (ANFV…VILY), 306-326 (ILFL…ILFF), 388-408 (VISN…IILW), and 418-438 (SMSL…LSSL). The ABC transmembrane type-1 domain maps to 168–450 (VFVILLTSLF…ILSMQSDLQQ (283 aa)). The 223-residue stretch at 483-705 (IKTVNLNIGA…SYSENKEYSI (223 aa)) folds into the ABC transporter domain. 516 to 523 (GESGTGKS) lines the ATP pocket.

Belongs to the ABC transporter superfamily. SunT family. Homodimer.

It localises to the cell membrane. Its function is as follows. SunT (TC 3.A.1.112.4) is required for production of the lantibiotic sublancin-168, probably by both processing the signal peptide and exporting the resulting mature lantibiotic. The sequence is that of SPbeta prophage-derived sublancin-168-processing and transport ATP-binding protein SunT (sunT) from Bacillus subtilis (strain 168).